The following is a 259-amino-acid chain: UPF0246 protein Avin_11220 (259 aa).

Belongs to the UPF0246 family.

The polypeptide is UPF0246 protein Avin_11220 (Azotobacter vinelandii (strain DJ / ATCC BAA-1303)).